Reading from the N-terminus, the 655-residue chain is HDA1 complex subunit 3 (655 aa).

Residues His482–Thr632 are a coiled coil. A disordered region spans residues Arg635 to Val655. Over residues Thr643–Val655 the composition is skewed to basic residues.

Belongs to the HDA2/3 family. HDA3 subfamily. Heterodimer with HDA2. Component of the HDA1 histone deacetylase complex composed of at least one HDA1 homodimer and one HDA2/HDA3 heterodimer. Interacts with HDA1 and HDA3.

It localises to the nucleus. Its function is as follows. Required for activity of HDA1 histone deacetylase complex. The HDA1 histone deacetylase complex is responsible for the deacetylation of lysine residues on the N-terminal part of the core histones (H2A, H2B, H3 and H4). Histone deacetylation gives a tag for epigenetic repression and plays an important role in transcriptional regulation, cell cycle progression and developmental events. This chain is HDA1 complex subunit 3 (HDA3), found in Saccharomyces cerevisiae (strain ATCC 204508 / S288c) (Baker's yeast).